Reading from the N-terminus, the 353-residue chain is tRNA-specific 2-thiouridylase MnmA 2 (353 aa).

Residue 6–13 (LLSGGVDS) participates in ATP binding. Residues 92–94 (NPD) are interaction with target base in tRNA. The Nucleophile role is filled by C97. A disulfide bridge connects residues C97 and C192. G120 provides a ligand contact to ATP. The interval 142–144 (KDQ) is interaction with tRNA. Residue C192 is the Cysteine persulfide intermediate of the active site.

Belongs to the MnmA/TRMU family.

The protein localises to the cytoplasm. The catalysed reaction is S-sulfanyl-L-cysteinyl-[protein] + uridine(34) in tRNA + AH2 + ATP = 2-thiouridine(34) in tRNA + L-cysteinyl-[protein] + A + AMP + diphosphate + H(+). Catalyzes the 2-thiolation of uridine at the wobble position (U34) of tRNA, leading to the formation of s(2)U34. The sequence is that of tRNA-specific 2-thiouridylase MnmA 2 from Bacteroides fragilis (strain YCH46).